The primary structure comprises 427 residues: Male abnormal protein mab-31 (427 aa).

The interval 68–102 is disordered; the sequence is PIGTGRFPNPSPPRSSSGTNTPIRKTPGSRPDRGK.

The protein localises to the nucleus. Putative transcription factor. Acts in a TGF-beta-like pathway during development of male-specific genital sensilla (simple sense organs), known as rays. Involved in production of reactive oxygen species (ROS), acting downstream of the TGF-beta-like dbl-1 signaling pathway. Involved in locomotory behavior. In Caenorhabditis elegans, this protein is Male abnormal protein mab-31.